The primary structure comprises 102 residues: RNA-binding protein Hfq (102 aa).

The 60-residue stretch at 9–68 (DPFLNALRRERVPVSIYLVNGIKLQGQIESFDQFVILLKNTVSQMVYKHAISTVVPSRPV) folds into the Sm domain. The disordered stretch occupies residues 65-102 (SRPVSHHSSNTSVGASVGNYHSGGVSAPAAQQESDGTE). Polar residues predominate over residues 93–102 (AAQQESDGTE).

Belongs to the Hfq family. Homohexamer.

Its function is as follows. RNA chaperone that binds small regulatory RNA (sRNAs) and mRNAs to facilitate mRNA translational regulation in response to envelope stress, environmental stress and changes in metabolite concentrations. Also binds with high specificity to tRNAs. The protein is RNA-binding protein Hfq of Photorhabdus laumondii subsp. laumondii (strain DSM 15139 / CIP 105565 / TT01) (Photorhabdus luminescens subsp. laumondii).